A 563-amino-acid polypeptide reads, in one-letter code: Efflux pump FUS6 (563 aa).

The disordered stretch occupies residues 1-30; that stretch reads MPQPDKMAAVNNAMPQPAPEKSLSSDPQPE. 5 consecutive transmembrane segments (helical) span residues 39 to 59, 75 to 95, 105 to 125, 138 to 158, and 167 to 187; these read WLIF…TSII, LYVW…PIFA, SLTL…GGAH, GIGG…MVSI, and IIGG…GAFA. The N-linked (GlcNAc...) asparagine glycan is linked to asparagine 189. The next 3 helical transmembrane spans lie at 194-214, 233-253, and 261-281; these read WIFY…GLFL, WGGS…LSWG, and GWQT…FFAY. The N-linked (GlcNAc...) asparagine glycan is linked to asparagine 299. 6 consecutive transmembrane segments (helical) span residues 305–325, 340–360, 368–388, 401–421, 433–453, and 509–529; these read LLVI…FLPV, VMLF…GITI, VWHF…TLLD, ILFG…ILAS, AWTF…AAVF, and KVVW…CFFV. A glycan (N-linked (GlcNAc...) asparagine) is linked at asparagine 553.

The protein belongs to the major facilitator superfamily. TCR/Tet family.

Its subcellular location is the membrane. Its function is as follows. Efflux pump; part of the gene cluster that mediates the biosynthesis of the mycotoxin fusarin C. Within the cluster, FUS1, FUS2, FUS8 and FUS9 are sufficient for fusarin production. The other FUS cluster members are not essential for fusarin C biosynthesis. The protein is Efflux pump FUS6 of Gibberella moniliformis (strain M3125 / FGSC 7600) (Maize ear and stalk rot fungus).